Reading from the N-terminus, the 354-residue chain is UDP-N-acetylglucosamine--N-acetylmuramyl-(pentapeptide) pyrophosphoryl-undecaprenol N-acetylglucosamine transferase (354 aa).

UDP-N-acetyl-alpha-D-glucosamine is bound by residues 15–17 (TGG), Asn-127, Arg-163, Ser-191, Ile-244, 263–268 (ALTVSE), and Gln-288.

This sequence belongs to the glycosyltransferase 28 family. MurG subfamily.

It localises to the cell inner membrane. The enzyme catalyses di-trans,octa-cis-undecaprenyl diphospho-N-acetyl-alpha-D-muramoyl-L-alanyl-D-glutamyl-meso-2,6-diaminopimeloyl-D-alanyl-D-alanine + UDP-N-acetyl-alpha-D-glucosamine = di-trans,octa-cis-undecaprenyl diphospho-[N-acetyl-alpha-D-glucosaminyl-(1-&gt;4)]-N-acetyl-alpha-D-muramoyl-L-alanyl-D-glutamyl-meso-2,6-diaminopimeloyl-D-alanyl-D-alanine + UDP + H(+). It functions in the pathway cell wall biogenesis; peptidoglycan biosynthesis. Cell wall formation. Catalyzes the transfer of a GlcNAc subunit on undecaprenyl-pyrophosphoryl-MurNAc-pentapeptide (lipid intermediate I) to form undecaprenyl-pyrophosphoryl-MurNAc-(pentapeptide)GlcNAc (lipid intermediate II). The chain is UDP-N-acetylglucosamine--N-acetylmuramyl-(pentapeptide) pyrophosphoryl-undecaprenol N-acetylglucosamine transferase from Aliivibrio salmonicida (strain LFI1238) (Vibrio salmonicida (strain LFI1238)).